Consider the following 214-residue polypeptide: Putative F-box protein At5g15670 (214 aa).

One can recognise an F-box domain in the interval 22–68 (RNKFDEIPHDLVIEILGRLPAKSVARFLTVSKLWATSIRSLDFIKSY).

This is Putative F-box protein At5g15670 from Arabidopsis thaliana (Mouse-ear cress).